Reading from the N-terminus, the 130-residue chain is Small ribosomal subunit protein uS9 (130 aa).

The tract at residues 111–130 (KERRKYGLKKARKAPQFSKR) is disordered.

This sequence belongs to the universal ribosomal protein uS9 family.

The sequence is that of Small ribosomal subunit protein uS9 from Thermoanaerobacter sp. (strain X514).